The sequence spans 455 residues: Bifunctional protein GlmU (455 aa).

The tract at residues methionine 1–arginine 227 is pyrophosphorylase. UDP-N-acetyl-alpha-D-glucosamine contacts are provided by residues leucine 8 to glycine 11, lysine 22, glutamine 72, and glycine 77 to threonine 78. Aspartate 100 provides a ligand contact to Mg(2+). UDP-N-acetyl-alpha-D-glucosamine contacts are provided by glycine 137, glutamate 152, asparagine 167, and asparagine 225. A Mg(2+)-binding site is contributed by asparagine 225. Residues glutamate 228–asparagine 248 form a linker region. Residues glycine 249–lysine 455 are N-acetyltransferase. UDP-N-acetyl-alpha-D-glucosamine-binding residues include arginine 330 and lysine 348. Histidine 360 serves as the catalytic Proton acceptor. 2 residues coordinate UDP-N-acetyl-alpha-D-glucosamine: tyrosine 363 and asparagine 374. Residues asparagine 383–tyrosine 384, serine 402, cysteine 420, and arginine 437 each bind acetyl-CoA.

The protein in the N-terminal section; belongs to the N-acetylglucosamine-1-phosphate uridyltransferase family. It in the C-terminal section; belongs to the transferase hexapeptide repeat family. As to quaternary structure, homotrimer. Mg(2+) serves as cofactor.

The protein localises to the cytoplasm. It catalyses the reaction alpha-D-glucosamine 1-phosphate + acetyl-CoA = N-acetyl-alpha-D-glucosamine 1-phosphate + CoA + H(+). The catalysed reaction is N-acetyl-alpha-D-glucosamine 1-phosphate + UTP + H(+) = UDP-N-acetyl-alpha-D-glucosamine + diphosphate. It participates in nucleotide-sugar biosynthesis; UDP-N-acetyl-alpha-D-glucosamine biosynthesis; N-acetyl-alpha-D-glucosamine 1-phosphate from alpha-D-glucosamine 6-phosphate (route II): step 2/2. The protein operates within nucleotide-sugar biosynthesis; UDP-N-acetyl-alpha-D-glucosamine biosynthesis; UDP-N-acetyl-alpha-D-glucosamine from N-acetyl-alpha-D-glucosamine 1-phosphate: step 1/1. Its pathway is bacterial outer membrane biogenesis; LPS lipid A biosynthesis. Catalyzes the last two sequential reactions in the de novo biosynthetic pathway for UDP-N-acetylglucosamine (UDP-GlcNAc). The C-terminal domain catalyzes the transfer of acetyl group from acetyl coenzyme A to glucosamine-1-phosphate (GlcN-1-P) to produce N-acetylglucosamine-1-phosphate (GlcNAc-1-P), which is converted into UDP-GlcNAc by the transfer of uridine 5-monophosphate (from uridine 5-triphosphate), a reaction catalyzed by the N-terminal domain. In Alkaliphilus oremlandii (strain OhILAs) (Clostridium oremlandii (strain OhILAs)), this protein is Bifunctional protein GlmU.